The chain runs to 312 residues: 2-phosphoglycerate kinase (312 aa).

In terms of domain architecture, ATP-cone spans S8–S95.

It belongs to the 2-phosphoglycerate kinase family. The cofactor is a divalent metal cation.

It catalyses the reaction (2R)-2-phosphoglycerate + ATP = (2R)-2,3-bisphosphoglycerate + ADP + H(+). It participates in thermoadapter biosynthesis; cyclic 2,3-diphosphoglycerate biosynthesis; cyclic 2,3-diphosphoglycerate from 2-phospho-D-glycerate: step 1/2. Functionally, catalyzes the phosphorylation of 2-phosphoglycerate to 2,3-diphosphoglycerate. Involved in the biosynthesis of cyclic 2,3-bisphosphoglycerate, a thermoprotectant. The sequence is that of 2-phosphoglycerate kinase from Methanococcus maripaludis (strain C7 / ATCC BAA-1331).